A 239-amino-acid polypeptide reads, in one-letter code: MATLGVNIDHIATIRQARRTVEPDPVAAAVLAELGGADGITVHLREDRRHIQDRDVQLLRHTVRTHLNLEMAATDEMVGIALDIKPDYVTLVPEKREEVTTEGGLDIVGQIARIGEVVSKLQNAAIPVSLFIDAEPSQIEASVKVQAKFIELHTGRYAEATDETSRQQELAFLAAGCEQAIKAGLRVNAGHGLTYWNVYPVAALPGMEELNIGHTIISRAALVGIERAVREMKQAIRGE.

Position 7 (asparagine 7) interacts with 3-amino-2-oxopropyl phosphate. 9 to 10 serves as a coordination point for 1-deoxy-D-xylulose 5-phosphate; it reads DH. Residue arginine 18 participates in 3-amino-2-oxopropyl phosphate binding. Histidine 43 functions as the Proton acceptor in the catalytic mechanism. 1-deoxy-D-xylulose 5-phosphate-binding residues include arginine 45 and histidine 50. The Proton acceptor role is filled by glutamate 70. Threonine 100 is a 1-deoxy-D-xylulose 5-phosphate binding site. Histidine 191 (proton donor) is an active-site residue. Residues glycine 192 and 213–214 each bind 3-amino-2-oxopropyl phosphate; that span reads GH.

Belongs to the PNP synthase family. Homooctamer; tetramer of dimers.

Its subcellular location is the cytoplasm. The enzyme catalyses 3-amino-2-oxopropyl phosphate + 1-deoxy-D-xylulose 5-phosphate = pyridoxine 5'-phosphate + phosphate + 2 H2O + H(+). The protein operates within cofactor biosynthesis; pyridoxine 5'-phosphate biosynthesis; pyridoxine 5'-phosphate from D-erythrose 4-phosphate: step 5/5. Functionally, catalyzes the complicated ring closure reaction between the two acyclic compounds 1-deoxy-D-xylulose-5-phosphate (DXP) and 3-amino-2-oxopropyl phosphate (1-amino-acetone-3-phosphate or AAP) to form pyridoxine 5'-phosphate (PNP) and inorganic phosphate. The protein is Pyridoxine 5'-phosphate synthase of Nostoc sp. (strain PCC 7120 / SAG 25.82 / UTEX 2576).